We begin with the raw amino-acid sequence, 527 residues long: Peptide chain release factor 3 (527 aa).

Positions Ala9–Leu277 constitute a tr-type G domain. GTP-binding positions include Ser18 to Thr25, Asp86 to His90, and Asn140 to Asp143.

This sequence belongs to the TRAFAC class translation factor GTPase superfamily. Classic translation factor GTPase family. PrfC subfamily.

The protein resides in the cytoplasm. Functionally, increases the formation of ribosomal termination complexes and stimulates activities of RF-1 and RF-2. It binds guanine nucleotides and has strong preference for UGA stop codons. It may interact directly with the ribosome. The stimulation of RF-1 and RF-2 is significantly reduced by GTP and GDP, but not by GMP. This is Peptide chain release factor 3 from Pseudomonas savastanoi pv. phaseolicola (strain 1448A / Race 6) (Pseudomonas syringae pv. phaseolicola (strain 1448A / Race 6)).